A 359-amino-acid polypeptide reads, in one-letter code: Zinc finger CCCH domain-containing protein 20 (359 aa).

3 consecutive C3H1-type zinc fingers follow at residues T75–E107, Y119–F145, and R153–D177. Disordered regions lie at residues S207 to S226 and M334 to M359.

This is Zinc finger CCCH domain-containing protein 20 from Arabidopsis thaliana (Mouse-ear cress).